The following is a 215-amino-acid chain: Autophagy-related protein 101 (215 aa).

Residues 124–147 form a disordered region; the sequence is PVGKSHHSKLVMDPGEASEERSSR.

It belongs to the ATG101 family. As to quaternary structure, interacts with ATG11 and ATG13A.

The protein localises to the cytoplasmic vesicle. It localises to the autophagosome. Its function is as follows. Accessory protein involved in autophagy. Acts as a scaffold protein of the ATG1-ATG13 complex for faithful delivery of autophagic vesicles to the vacuole. Required for selective mitophagy. This Arabidopsis thaliana (Mouse-ear cress) protein is Autophagy-related protein 101.